A 424-amino-acid chain; its full sequence is 3-phosphoshikimate 1-carboxyvinyltransferase (424 aa).

Residues K21, S22, and R26 each contribute to the 3-phosphoshikimate site. K21 is a phosphoenolpyruvate binding site. Positions 92 and 120 each coordinate phosphoenolpyruvate. 3-phosphoshikimate contacts are provided by S163, S164, Q165, S191, D306, and K333. Q165 serves as a coordination point for phosphoenolpyruvate. Residue D306 is the Proton acceptor of the active site. R337, R379, and K405 together coordinate phosphoenolpyruvate.

Belongs to the EPSP synthase family. As to quaternary structure, monomer.

Its subcellular location is the cytoplasm. The enzyme catalyses 3-phosphoshikimate + phosphoenolpyruvate = 5-O-(1-carboxyvinyl)-3-phosphoshikimate + phosphate. It functions in the pathway metabolic intermediate biosynthesis; chorismate biosynthesis; chorismate from D-erythrose 4-phosphate and phosphoenolpyruvate: step 6/7. In terms of biological role, catalyzes the transfer of the enolpyruvyl moiety of phosphoenolpyruvate (PEP) to the 5-hydroxyl of shikimate-3-phosphate (S3P) to produce enolpyruvyl shikimate-3-phosphate and inorganic phosphate. The protein is 3-phosphoshikimate 1-carboxyvinyltransferase of Clostridium perfringens (strain 13 / Type A).